Consider the following 235-residue polypeptide: Small ribosomal subunit protein uS3 (235 aa).

In terms of domain architecture, KH type-2 spans 39–107 (IRTYIENELK…ETHLNIVEVR (69 aa)). Residues 215–235 (SERRAVEGAGDGGGQRRRENA) form a disordered region.

This sequence belongs to the universal ribosomal protein uS3 family. In terms of assembly, part of the 30S ribosomal subunit. Forms a tight complex with proteins S10 and S14.

Functionally, binds the lower part of the 30S subunit head. Binds mRNA in the 70S ribosome, positioning it for translation. The sequence is that of Small ribosomal subunit protein uS3 from Chelativorans sp. (strain BNC1).